The sequence spans 329 residues: Short-chain dehydrogenase/reductase prx4 (329 aa).

The N-terminal stretch at M1 to C21 is a signal peptide. The NADP(+) site is built by S58, I60, and N81. N-linked (GlcNAc...) asparagine glycosylation is present at N91. NADP(+) is bound by residues D98, N121, K161, Y194, K198, and T229. Y194 (proton acceptor) is an active-site residue. The Lowers pKa of active site Tyr role is filled by K198. The chain crosses the membrane as a helical span at residues G238–V258.

Belongs to the short-chain dehydrogenases/reductases (SDR) family.

It localises to the membrane. It functions in the pathway sesquiterpene biosynthesis. Functionally, short-chain dehydrogenase/reductase; part of the gene cluster that mediates the biosynthesis of PR-toxin, a bicyclic sesquiterpene belonging to the eremophilane class and acting as a mycotoxin. The first step of the pathway is catalyzed by the aristolochene synthase which performs the cyclization of trans,trans-farnesyl diphosphate (FPP) to the bicyclic sesquiterpene aristolochene. Following the formation of aristolochene, the non-oxygenated aristolochene is converted to the trioxygenated intermediate eremofortin B, via 7-epi-neopetasone. This conversion appears to involve three enzymes, a hydroxysterol oxidase-like enzyme, the quinone-oxidase prx3 that forms the quinone-type-structure in the bicyclic nucleus of aristolochene with the C8-oxo group and the C-3 hydroxyl group, and the P450 monooxygenase prx9 that introduces the epoxide at the double bond between carbons 1 and 2. No monoxy or dioxy-intermediates have been reported to be released to the broth, so these three early oxidative reactions may be coupled together. Eremofortin B is further oxidized by another P450 monooxygenase, that introduces a second epoxide between carbons 7 and 11 prior to acetylation to eremofortin A by the acetyltransferase prx11. The second epoxidation may be performed by a second P450 monooxygenase. After the acetylation step, eremofortin A is converted to eremofortin C and then to PR-toxin. First the conversion of eremofortin A to eremofortin C proceeds by oxidation of the side chain of the molecule at C-12 and is catalyzed by the short-chain oxidoreductase prx1. The cytochrome P450 monooxygenase prx8 also plays a role in this step. The primary alcohol formed at C-12 is finally oxidized by the short-chain alcohol dehydrogenase prx4 that forms PR-toxin. In Penicillium rubens (strain ATCC 28089 / DSM 1075 / NRRL 1951 / Wisconsin 54-1255) (Penicillium chrysogenum), this protein is Short-chain dehydrogenase/reductase prx4.